The chain runs to 485 residues: N-succinylglutamate 5-semialdehyde dehydrogenase (485 aa).

220-225 (GSANTG) serves as a coordination point for NAD(+). Active-site residues include Glu243 and Cys278.

This sequence belongs to the aldehyde dehydrogenase family. AstD subfamily.

It catalyses the reaction N-succinyl-L-glutamate 5-semialdehyde + NAD(+) + H2O = N-succinyl-L-glutamate + NADH + 2 H(+). The protein operates within amino-acid degradation; L-arginine degradation via AST pathway; L-glutamate and succinate from L-arginine: step 4/5. In terms of biological role, catalyzes the NAD-dependent reduction of succinylglutamate semialdehyde into succinylglutamate. The protein is N-succinylglutamate 5-semialdehyde dehydrogenase of Aliivibrio salmonicida (strain LFI1238) (Vibrio salmonicida (strain LFI1238)).